Consider the following 307-residue polypeptide: Olfactory receptor 5M3 (307 aa).

Topologically, residues 1–23 (MLNFTDVTEFILLGLTSRREWQV) are extracellular. A glycan (N-linked (GlcNAc...) asparagine) is linked at asparagine 3. A helical transmembrane segment spans residues 24-44 (LFFIIFLVVYIITMVGNIGMM). Residues 45 to 52 (VLIKVSPQ) lie on the Cytoplasmic side of the membrane. A helical membrane pass occupies residues 53-73 (LNNPMYFFLSHLSFVDVWFSS). Over 74–97 (NVTPKMLENLLSDKKTITYAGCLV) the chain is Extracellular. An intrachain disulfide couples cysteine 95 to cysteine 187. Residues 98 to 118 (QCFFFIALVHVEIFILAAMAF) traverse the membrane as a helical segment. The Cytoplasmic portion of the chain corresponds to 119-137 (DRYMAIGNPLLYGSKMSRV). Residues 138–158 (VCIRLITFPYIYGFLTSLAAT) form a helical membrane-spanning segment. The Extracellular segment spans residues 159–194 (LWTYGLYFCGKIEINHFYCADPPLIKMACAGTFVKE). Residues 195 to 215 (YTMIILAGINFTYSLTVIIIS) traverse the membrane as a helical segment. Over 216–235 (YLFILIAILRMRSAEGRQKA) the chain is Cytoplasmic. A helical membrane pass occupies residues 236–256 (FSTCGSHLTAVIIFYGTLIFM). Residues 257–269 (YLRRPTEESVEQG) are Extracellular-facing. The chain crosses the membrane as a helical span at residues 270–290 (KMVAVFYTTVIPMLNPMIYSL). Residues 291-307 (RNKDVKKAMMKVISRSC) are Cytoplasmic-facing.

The protein belongs to the G-protein coupled receptor 1 family.

The protein localises to the cell membrane. Functionally, odorant receptor. This Homo sapiens (Human) protein is Olfactory receptor 5M3 (OR5M3).